Consider the following 1030-residue polypeptide: Pro-apoptotic serine protease NMA111 (1030 aa).

The interval 1–48 (MNGTTSPIAARSKRKEPPHTVDGRHPKHHRTNGEVAPAADNTPDNQDE) is disordered. A compositionally biased stretch (basic and acidic residues) spans 15–24 (KEPPHTVDGR). The tract at residues 89 to 279 (VVSIRFCQTC…LPLDRPLRAL (191 aa)) is serine protease. Residues His-127, Asp-158, and Ser-240 each act as charge relay system in the active site. PDZ domains are found at residues 312–384 (PEWE…LRGG) and 880–960 (AVSF…LRAM).

Belongs to the peptidase S1C family.

The protein resides in the nucleus. Its function is as follows. Nuclear serine protease which mediates apoptosis. The protein is Pro-apoptotic serine protease NMA111 (NMA111) of Chaetomium globosum (strain ATCC 6205 / CBS 148.51 / DSM 1962 / NBRC 6347 / NRRL 1970) (Soil fungus).